Consider the following 658-residue polypeptide: ATP-dependent DNA helicase Rep (658 aa).

Residues 1–280 enclose the UvrD-like helicase ATP-binding domain; that stretch reads MSLNFNQKNA…IKMEQNYRSY (280 aa). Residues 22–29 and arginine 278 contribute to the ATP site; that span reads AGAGSGKT. One can recognise a UvrD-like helicase C-terminal domain in the interval 281 to 564; sequence GRILKAANKL…QLMTLHSSKG (284 aa).

This sequence belongs to the helicase family. UvrD subfamily. As to quaternary structure, homodimer.

It catalyses the reaction Couples ATP hydrolysis with the unwinding of duplex DNA by translocating in the 3'-5' direction.. The catalysed reaction is ATP + H2O = ADP + phosphate + H(+). In terms of biological role, rep helicase is a single-stranded DNA-dependent ATPase involved in DNA replication; it can initiate unwinding at a nick in the DNA. It binds to the single-stranded DNA and acts in a progressive fashion along the DNA in the 3' to 5' direction. This Buchnera aphidicola subsp. Schizaphis graminum (strain Sg) protein is ATP-dependent DNA helicase Rep.